Reading from the N-terminus, the 59-residue chain is Ribosome biogenesis protein Nop10 (59 aa).

Belongs to the NOP10 family.

Functionally, involved in ribosome biogenesis; more specifically in 18S rRNA pseudouridylation and in cleavage of pre-rRNA. This Thermococcus kodakarensis (strain ATCC BAA-918 / JCM 12380 / KOD1) (Pyrococcus kodakaraensis (strain KOD1)) protein is Ribosome biogenesis protein Nop10.